A 216-amino-acid chain; its full sequence is Cell division protein SepF (216 aa).

Positions 22 to 126 (EYVEEPDQAR…PVVDDGGPLA (105 aa)) are disordered. Basic and acidic residues-rich tracts occupy residues 28-50 (DQAR…REFV), 62-80 (SRRD…RPRV), and 106-118 (ARAE…RAPV).

It belongs to the SepF family. Homodimer. Interacts with FtsZ.

Its subcellular location is the cytoplasm. Its function is as follows. Cell division protein that is part of the divisome complex and is recruited early to the Z-ring. Probably stimulates Z-ring formation, perhaps through the cross-linking of FtsZ protofilaments. Its function overlaps with FtsA. The protein is Cell division protein SepF of Rhodococcus erythropolis (strain PR4 / NBRC 100887).